We begin with the raw amino-acid sequence, 112 residues long: MQNIKLEKREQDILINISRIISEEVQNLKDVLTTVVGIKLSSDLSHCNVYVTFSKNSKKNLERLNQASGYIKKQLSSILKWRKIPSLHFKIDDTFEKSLKIEQILEEIKKEK.

Belongs to the RbfA family. Monomer. Binds 30S ribosomal subunits, but not 50S ribosomal subunits or 70S ribosomes.

Its subcellular location is the cytoplasm. Functionally, one of several proteins that assist in the late maturation steps of the functional core of the 30S ribosomal subunit. Associates with free 30S ribosomal subunits (but not with 30S subunits that are part of 70S ribosomes or polysomes). Required for efficient processing of 16S rRNA. May interact with the 5'-terminal helix region of 16S rRNA. The polypeptide is Ribosome-binding factor A (Mycoplasmopsis pulmonis (strain UAB CTIP) (Mycoplasma pulmonis)).